Here is a 107-residue protein sequence, read N- to C-terminus: NADH-quinone oxidoreductase subunit K (107 aa).

3 helical membrane passes run 9 to 29 (IGVNHFLTISVILFGLGMFAV), 36 to 56 (IVILMGVELILNAANINFLTF), and 68 to 88 (FSLFVIVLAAAEAAIALAIVI).

The protein belongs to the complex I subunit 4L family. NDH-1 is composed of 14 different subunits. Subunits NuoA, H, J, K, L, M, N constitute the membrane sector of the complex.

The protein resides in the cell inner membrane. The catalysed reaction is a quinone + NADH + 5 H(+)(in) = a quinol + NAD(+) + 4 H(+)(out). In terms of biological role, NDH-1 shuttles electrons from NADH, via FMN and iron-sulfur (Fe-S) centers, to quinones in the respiratory chain. The immediate electron acceptor for the enzyme in this species is believed to be a menaquinone. Couples the redox reaction to proton translocation (for every two electrons transferred, four hydrogen ions are translocated across the cytoplasmic membrane), and thus conserves the redox energy in a proton gradient. The protein is NADH-quinone oxidoreductase subunit K of Chlorobaculum tepidum (strain ATCC 49652 / DSM 12025 / NBRC 103806 / TLS) (Chlorobium tepidum).